The sequence spans 123 residues: Small ribosomal subunit protein uS12cz/uS12cy/uS12cx/uS12w (123 aa).

Over residues 1–13 (MPTSNQLLRNSRQ) the composition is skewed to polar residues. A disordered region spans residues 1–30 (MPTSNQLLRNSRQPVRKTKKTPALRGCPQR). Over residues 14 to 30 (PVRKTKKTPALRGCPQR) the composition is skewed to basic residues.

Belongs to the universal ribosomal protein uS12 family. In terms of assembly, part of the 30S ribosomal subunit.

It is found in the plastid. The protein resides in the chloroplast. In terms of biological role, with S4 and S5 plays an important role in translational accuracy. Located at the interface of the 30S and 50S subunits. The chain is Small ribosomal subunit protein uS12cz/uS12cy/uS12cx/uS12w (rps12-A) from Pelargonium hortorum (Common geranium).